A 376-amino-acid polypeptide reads, in one-letter code: Probable ureide permease A3 (376 aa).

Over 1-9 (HLVESKGGA) the chain is Extracellular. A helical membrane pass occupies residues 10 to 30 (IACMFLALFFLGTWPALLTML). The Cytoplasmic segment spans residues 31-41 (ERRGRLPQHTY). Residues 42–62 (LDYSITNFFAALLIAFTFGEI) traverse the membrane as a helical segment. Topologically, residues 63-80 (GKGKPDEPNFLAQLAQDN) are extracellular. Residues 81 to 101 (WPSVLFAMGGGVVLSLGNLSS) traverse the membrane as a helical segment. Over 102-103 (QY) the chain is Cytoplasmic. A helical transmembrane segment spans residues 104–124 (AFAFVGLSVTEVITASITVVI). At 125–137 (GTTLNYFLDDKIN) the chain is on the extracellular side. A helical transmembrane segment spans residues 138-158 (KAEILFPGVGCFLIAVFLGFC). The Cytoplasmic segment spans residues 159–231 (RFNSSNASDN…RAIKVFGKST (73 aa)). ATP is bound at residue 223-230 (AIKVFGKS). Residues 232 to 252 (LIGLALTFSAGLCFSMFSPAF) traverse the membrane as a helical segment. The Extracellular portion of the chain corresponds to 253–274 (NLATNDQWHTLPNGIPHLTVYT). A helical membrane pass occupies residues 275 to 295 (AFFYFSISCFVIAIILNITFL). Over 296-317 (YHPVLNLPKSSLKAYLADSDGR) the chain is Cytoplasmic. The chain crosses the membrane as a helical span at residues 318 to 338 (IWALLAGLLCGFGNSLQFMGG). Residues 339–376 (QAAGYQQQSLCRHFLCKHFWGVLLFGEYRRSSRKTYIC) lie on the Extracellular side of the membrane.

It belongs to the plant ureide permease (TC 2.A.7.19) family.

The protein resides in the membrane. In terms of biological role, transports a wide spectrum of oxo derivatives of heterocyclic nitrogen compounds. The chain is Probable ureide permease A3 (A3) from Vigna unguiculata (Cowpea).